Here is a 146-residue protein sequence, read N- to C-terminus: Large ribosomal subunit protein uL15 (146 aa).

The segment at 1–54 is disordered; it reads MNLTDLRPADGSKQSGNFRRGRGHGSGNGKTAGKGHKGQKARSGAPRVGFEGGQ.

It belongs to the universal ribosomal protein uL15 family. As to quaternary structure, part of the 50S ribosomal subunit.

Functionally, binds to the 23S rRNA. The chain is Large ribosomal subunit protein uL15 from Lachnoclostridium phytofermentans (strain ATCC 700394 / DSM 18823 / ISDg) (Clostridium phytofermentans).